A 362-amino-acid polypeptide reads, in one-letter code: UDP-N-acetylglucosamine--N-acetylmuramyl-(pentapeptide) pyrophosphoryl-undecaprenol N-acetylglucosamine transferase (362 aa).

UDP-N-acetyl-alpha-D-glucosamine is bound by residues 11 to 13 (TGG), Asn124, Arg163, Ser191, Ile246, and Gln291.

The protein belongs to the glycosyltransferase 28 family. MurG subfamily.

Its subcellular location is the cell inner membrane. It catalyses the reaction di-trans,octa-cis-undecaprenyl diphospho-N-acetyl-alpha-D-muramoyl-L-alanyl-D-glutamyl-meso-2,6-diaminopimeloyl-D-alanyl-D-alanine + UDP-N-acetyl-alpha-D-glucosamine = di-trans,octa-cis-undecaprenyl diphospho-[N-acetyl-alpha-D-glucosaminyl-(1-&gt;4)]-N-acetyl-alpha-D-muramoyl-L-alanyl-D-glutamyl-meso-2,6-diaminopimeloyl-D-alanyl-D-alanine + UDP + H(+). Its pathway is cell wall biogenesis; peptidoglycan biosynthesis. In terms of biological role, cell wall formation. Catalyzes the transfer of a GlcNAc subunit on undecaprenyl-pyrophosphoryl-MurNAc-pentapeptide (lipid intermediate I) to form undecaprenyl-pyrophosphoryl-MurNAc-(pentapeptide)GlcNAc (lipid intermediate II). The chain is UDP-N-acetylglucosamine--N-acetylmuramyl-(pentapeptide) pyrophosphoryl-undecaprenol N-acetylglucosamine transferase from Idiomarina loihiensis (strain ATCC BAA-735 / DSM 15497 / L2-TR).